The sequence spans 453 residues: tRNA modification GTPase MnmE (453 aa).

The (6S)-5-formyl-5,6,7,8-tetrahydrofolate site is built by Arg22, Glu79, and Lys119. In terms of domain architecture, TrmE-type G spans 215–376 (GMKVVIAGRP…LRNHLKECMG (162 aa)). Asn225 is a K(+) binding site. GTP is bound by residues 225–230 (NAGKSS), 244–250 (TDIAGTT), 269–272 (DTAG), and 334–337 (NKAD). Ser229 lines the Mg(2+) pocket. 3 residues coordinate K(+): Thr244, Ile246, and Thr249. Residue Thr250 participates in Mg(2+) binding. Position 453 (Lys453) interacts with (6S)-5-formyl-5,6,7,8-tetrahydrofolate.

The protein belongs to the TRAFAC class TrmE-Era-EngA-EngB-Septin-like GTPase superfamily. TrmE GTPase family. In terms of assembly, homodimer. Heterotetramer of two MnmE and two MnmG subunits. The cofactor is K(+).

It localises to the cytoplasm. In terms of biological role, exhibits a very high intrinsic GTPase hydrolysis rate. Involved in the addition of a carboxymethylaminomethyl (cmnm) group at the wobble position (U34) of certain tRNAs, forming tRNA-cmnm(5)s(2)U34. The polypeptide is tRNA modification GTPase MnmE (Vibrio parahaemolyticus serotype O3:K6 (strain RIMD 2210633)).